The primary structure comprises 139 residues: uncharacterized protein (139 aa).

Residues 22-38 (SVMSVCFMTMSATVLPI) form a helical membrane-spanning segment.

It localises to the membrane. This is an uncharacterized protein from Saccharomyces cerevisiae (strain ATCC 204508 / S288c) (Baker's yeast).